A 118-amino-acid chain; its full sequence is Large ribosomal subunit protein bL20 (118 aa).

This sequence belongs to the bacterial ribosomal protein bL20 family.

Functionally, binds directly to 23S ribosomal RNA and is necessary for the in vitro assembly process of the 50S ribosomal subunit. It is not involved in the protein synthesizing functions of that subunit. In Buchnera aphidicola subsp. Acyrthosiphon pisum (strain 5A), this protein is Large ribosomal subunit protein bL20.